A 157-amino-acid chain; its full sequence is Transcription elongation factor GreA (157 aa).

Residues 46–67 (AEYHAARERQSFIEGRIKELED) adopt a coiled-coil conformation.

The protein belongs to the GreA/GreB family.

In terms of biological role, necessary for efficient RNA polymerase transcription elongation past template-encoded arresting sites. The arresting sites in DNA have the property of trapping a certain fraction of elongating RNA polymerases that pass through, resulting in locked ternary complexes. Cleavage of the nascent transcript by cleavage factors such as GreA or GreB allows the resumption of elongation from the new 3'terminus. GreA releases sequences of 2 to 3 nucleotides. In Rhodospirillum rubrum (strain ATCC 11170 / ATH 1.1.1 / DSM 467 / LMG 4362 / NCIMB 8255 / S1), this protein is Transcription elongation factor GreA.